The chain runs to 392 residues: O-phospho-L-seryl-tRNA:Cys-tRNA synthase (392 aa).

Pyridoxal 5'-phosphate contacts are provided by residues 85-86 (AR), asparagine 190, and 213-215 (SGH). Lysine 216 is subject to N6-(pyridoxal phosphate)lysine.

The protein belongs to the SepCysS family. In terms of assembly, homodimer. Interacts with SepRS. Requires pyridoxal 5'-phosphate as cofactor.

It carries out the reaction O-phospho-L-seryl-tRNA(Cys) + hydrogen sulfide + H(+) = L-cysteinyl-tRNA(Cys) + phosphate. Its function is as follows. Converts O-phospho-L-seryl-tRNA(Cys) (Sep-tRNA(Cys)) to L-cysteinyl-tRNA(Cys) (Cys-tRNA(Cys)). This is O-phospho-L-seryl-tRNA:Cys-tRNA synthase from Methanoculleus marisnigri (strain ATCC 35101 / DSM 1498 / JR1).